Here is a 118-residue protein sequence, read N- to C-terminus: Large ribosomal subunit protein bL19 (118 aa).

It belongs to the bacterial ribosomal protein bL19 family.

In terms of biological role, this protein is located at the 30S-50S ribosomal subunit interface and may play a role in the structure and function of the aminoacyl-tRNA binding site. The protein is Large ribosomal subunit protein bL19 of Levilactobacillus brevis (strain ATCC 367 / BCRC 12310 / CIP 105137 / JCM 1170 / LMG 11437 / NCIMB 947 / NCTC 947) (Lactobacillus brevis).